Reading from the N-terminus, the 157-residue chain is Succinate dehydrogenase [ubiquinone] cytochrome b small subunit, mitochondrial (157 aa).

A mitochondrion-targeting transit peptide spans 1–45; it reads MAALVLLRAGLARPRGVPTALLRGTLLRHSAVLTAAADRSAPARQ. The Mitochondrial matrix segment spans residues 46 to 61; that stretch reads SHGGAPQGHGSSKAAS. Residues 62–83 traverse the membrane as a helical segment; that stretch reads LHWTSERAVSALLLGLLPAAYL. Over 84-88 the chain is Mitochondrial intermembrane; it reads YPGPA. The chain crosses the membrane as a helical span at residues 89–109; the sequence is VDYSLAAALTLHGHWGLGQVI. Histidine 100 contacts heme b. The Mitochondrial matrix segment spans residues 110 to 118; that stretch reads TDYVHGDTP. Tyrosine 112 contacts a ubiquinone. A helical membrane pass occupies residues 119-140; that stretch reads IKVANTGLYVLSAITFTGLCYF. At 141 to 157 the chain is on the mitochondrial intermembrane side; that stretch reads NYYDVGICKAVAMLWSI.

Belongs to the CybS family. As to quaternary structure, component of complex II composed of four subunits: the flavoprotein (FP) SDHA, iron-sulfur protein (IP) SDHB, and a cytochrome b560 composed of SDHC and SDHD.

The protein resides in the mitochondrion inner membrane. The protein operates within carbohydrate metabolism; tricarboxylic acid cycle. In terms of biological role, membrane-anchoring subunit of succinate dehydrogenase (SDH) that is involved in complex II of the mitochondrial electron transport chain and is responsible for transferring electrons from succinate to ubiquinone (coenzyme Q). SDH also oxidizes malate to the non-canonical enol form of oxaloacetate, enol-oxaloacetate. Enol-oxaloacetate, which is a potent inhibitor of the succinate dehydrogenase activity, is further isomerized into keto-oxaloacetate. The sequence is that of Succinate dehydrogenase [ubiquinone] cytochrome b small subunit, mitochondrial (SDHD) from Gallus gallus (Chicken).